Reading from the N-terminus, the 370-residue chain is Acyl-CoA:lysophosphatidylglycerol acyltransferase 1 (370 aa).

The helical transmembrane segment at 22 to 42 threads the bilayer; it reads FAFMVANNLVAIPSYICYVII. An HXXXXD motif motif is present at residues 101–106; that stretch reads HQATGD. The helical transmembrane segment at 342-362 threads the bilayer; the sequence is MWIFLIQSFAFLSGYLWYHII.

This sequence belongs to the 1-acyl-sn-glycerol-3-phosphate acyltransferase family. As to expression, ubiquitous. Expressed in heart, kidney, liver, skin, intestine, and thymus. Highest expression is detected in brain and testis.

The protein resides in the endoplasmic reticulum membrane. It carries out the reaction a 2-acyl-sn-glycero-3-phosphoethanolamine + octadecanoyl-CoA = 1-octadecanoyl-2-acyl-sn-glycero-3-phosphoethanolamine + CoA. It catalyses the reaction 2-(9Z-octadecenoyl)-sn-glycero-3-phosphoethanolamine + octadecanoyl-CoA = 1-octadecanoyl-2-(9Z-octadecenoyl)-sn-glycero-3-phosphoethanolamine + CoA. The enzyme catalyses a 2-acyl-sn-glycero-3-phosphoethanolamine + hexadecanoyl-CoA = 1-hexadecanoyl-2-acyl-sn-glycero-3-phosphoethanolamine + CoA. The catalysed reaction is 2-(9Z-octadecenoyl)-sn-glycero-3-phosphoethanolamine + hexadecanoyl-CoA = 1-hexadecanoyl-2-(9Z-octadecenoyl)-sn-glycero-3-phosphoethanolamine + CoA. It carries out the reaction 1-tetradecanoyl-sn-glycero-3-phospho-(1'-sn-glycerol) + hexadecanoyl-CoA = 1-tetradecanoyl-2-hexadecanoyl-sn-glycero-3-phospho-(1'-sn-glycerol) + CoA. It catalyses the reaction 1-hexadecanoyl-sn-glycero-3-phospho-(1'-sn-glycerol) + dodecanoyl-CoA = 1-hexadecanoyl-2-dodecanoyl-sn-glycero-3-phospho-(1'-sn-glycerol) + CoA. The enzyme catalyses 1-hexadecanoyl-sn-glycero-3-phospho-(1'-sn-glycerol) + hexadecanoyl-CoA = 1,2-dihexadecanoyl-sn-glycero-3-phospho-(1'-sn-glycerol) + CoA. The catalysed reaction is 1-hexadecanoyl-sn-glycero-3-phospho-(1'-sn-glycerol) + octadecanoyl-CoA = 1-hexadecanoyl-2-octadecanoyl-sn-glycero-3-phospho-(1'-sn-glycerol) + CoA. It carries out the reaction 1-octadecanoyl-sn-glycero-3-phospho-(1'-sn-glycerol) + hexadecanoyl-CoA = 1-octadecanoyl-2-hexadecanoyl-sn-glycero-3-phospho-(1'-sn-glycerol) + CoA. It catalyses the reaction 1-(9Z-octadecenoyl)-sn-glycero-3-phospho-(1'-sn-glycerol) + dodecanoyl-CoA = 1-(9Z-octadecenoyl)-2-dodecanoyl-sn-glycero-3-phospho-(1'-sn-glycerol) + CoA. The enzyme catalyses 1-hexadecanoyl-sn-glycero-3-phospho-(1'-sn-glycerol) + (9Z)-octadecenoyl-CoA = 1-hexadecanoyl-2-(9Z-octadecenoyl)-sn-glycero-3-phospho-(1'-sn-glycerol) + CoA. The catalysed reaction is 1-(9Z-octadecenoyl)-sn-glycero-3-phospho-(1'-sn-glycerol) + hexadecanoyl-CoA = 1-(9Z-octadecenoyl)-2-hexadecanoyl-sn-glycero-3-phospho-(1'-sn-glycerol) + CoA. It carries out the reaction 1-(9Z-octadecenoyl)-sn-glycero-3-phospho-(1'-sn-glycerol) + (9Z)-octadecenoyl-CoA = 1,2-di-(9Z-octadecenoyl)-sn-glycero-3-phospho-(1'-sn-glycerol) + CoA. It catalyses the reaction a 2-acylglycerol + an acyl-CoA = a 1,2-diacylglycerol + CoA. The enzyme catalyses a 2-acylglycerol + hexadecanoyl-CoA = a 1-hexadecanoyl-2-acylglycerol + CoA. The catalysed reaction is a 1-acylglycerol + hexadecanoyl-CoA = an hexadecanoyl-acylglycerol + CoA. It carries out the reaction a 2-acyl-sn-glycero-3-phosphocholine + an acyl-CoA = a 1,2-diacyl-sn-glycero-3-phosphocholine + CoA. It catalyses the reaction 2-(9Z-octadecenoyl)-sn-glycero-3-phosphocholine + octadecanoyl-CoA = 1-octadecanoyl-2-(9Z-octadecenoyl)-sn-glycero-3-phosphocholine + CoA. The enzyme catalyses 2-(9Z,12Z-octadecadienoyl)-sn-glycero-3-phosphocholine + octadecanoyl-CoA = 1-octadecanoyl-2-(9Z,12Z)-octadecadienoyl-sn-glycero-3-phosphocholine + CoA. The catalysed reaction is 2-(5Z,8Z,11Z,14Z)-eicosatetraenoyl-sn-glycero-3-phosphocholine + octadecanoyl-CoA = 1-octadecanoyl-2-(5Z,8Z,11Z,14Z-eicosatetraenoyl)-sn-glycero-3-phosphocholine + CoA. It carries out the reaction 2-(9Z-octadecenoyl)-sn-glycero-3-phosphocholine + hexadecanoyl-CoA = 1-hexadecanoyl-2-(9Z-octadecenoyl)-sn-glycero-3-phosphocholine + CoA. It catalyses the reaction 2-(9Z-octadecenoyl)-sn-glycero-3-phospho-L-serine + hexadecanoyl-CoA = 1-hexadecanoyl-2-(9Z-octadecenoyl)-sn-glycero-3-phospho-L-serine + CoA. The enzyme catalyses 2-(4Z,7Z,10Z,13Z,16Z,19Z-docosahexaenoyl)-sn-glycero-3-phosphocholine + octadecanoyl-CoA = 1-octadecanoyl-2-(4Z,7Z,10Z,13Z,16Z,19Z-docosahexaenoyl)-sn-glycero-3-phosphocholine + CoA. The catalysed reaction is 1-(9Z-octadecenoyl)-sn-glycero-3-phospho-L-serine + octadecanoyl-CoA = 1-(9Z-octadecenoyl)-2-octadecanoyl-sn-glycero-3-phospho-L-serine + CoA. It carries out the reaction a 2-acyl-sn-glycero-3-phosphoethanolamine + a fatty acyl-CoA = a 1,2-diacyl-sn-glycero-3-phosphoethanolamine + CoA. Functionally, lysophospholipid acyltransferase involved in fatty acyl chain remodeling of glycerophospholipids in the endoplasmic reticulum membrane. Selectively catalyzes the transfer and esterification of saturated long-chain fatty acids from acyl-CoA to the sn-1 position of 1-lyso-2-acyl phosphatidylethanolamines (1-lyso-PE, LPE), with a preference for stearoyl CoA over palmitoyl CoA as acyl donor. Acts in concert with an unknown phospholipase A1 to convert palmitate PE species into stearate ones. Provides substrates to the PE methylation pathway, controlling stearate/palmitate composition of PE and phosphatidylcholine (PC) species with an overall impact on de novo hepatic lipid synthesis, body fat content and life span. Can acylate lysophosphatidylglycerols (LPG) using various saturated fatty acyl-CoAs as acyl donors. Can also acylate monoacylglycerols with a preference for 2-monoacylglycerols over 1-monoacylglycerols. Has no activity toward lysophosphatidic acids (LPA) and lysophosphatidylcholines (LPC). This chain is Acyl-CoA:lysophosphatidylglycerol acyltransferase 1, found in Mus musculus (Mouse).